The following is a 506-amino-acid chain: Chromosomal replication initiator protein DnaA (506 aa).

The tract at residues 1-77 (MECATTATTP…IWAEESGAKR (77 aa)) is domain I, interacts with DnaA modulators. The domain II stretch occupies residues 77 to 162 (RRVDLAVRNA…AVAGDVASGS (86 aa)). Composition is skewed to basic and acidic residues over residues 103-112 (TERTDMHSGD) and 121-142 (SDGRSTDARGADGRGSDARAVE). Residues 103 to 142 (TERTDMHSGDTRQQSARISDGRSTDARGADGRGSDARAVE) form a disordered region. Positions 163–384 (PLDARLTFET…GALNKLLAFN (222 aa)) are domain III, AAA+ region. Residues Gly210, Gly212, Lys213, and Thr214 each contribute to the ATP site. The tract at residues 385–506 (QLTGEPVTLE…EVLKRLALEA (122 aa)) is domain IV, binds dsDNA.

Belongs to the DnaA family. In terms of assembly, oligomerizes as a right-handed, spiral filament on DNA at oriC.

It localises to the cytoplasm. Its function is as follows. Plays an essential role in the initiation and regulation of chromosomal replication. ATP-DnaA binds to the origin of replication (oriC) to initiate formation of the DNA replication initiation complex once per cell cycle. Binds the DnaA box (a 9 base pair repeat at the origin) and separates the double-stranded (ds)DNA. Forms a right-handed helical filament on oriC DNA; dsDNA binds to the exterior of the filament while single-stranded (ss)DNA is stabiized in the filament's interior. The ATP-DnaA-oriC complex binds and stabilizes one strand of the AT-rich DNA unwinding element (DUE), permitting loading of DNA polymerase. After initiation quickly degrades to an ADP-DnaA complex that is not apt for DNA replication. Binds acidic phospholipids. In Xanthobacter autotrophicus (strain ATCC BAA-1158 / Py2), this protein is Chromosomal replication initiator protein DnaA.